The primary structure comprises 723 residues: Fatty acid oxidation complex subunit alpha (723 aa).

The tract at residues 1 to 189 (MIYQAKTLQV…KVGLLDAIVD (189 aa)) is enoyl-CoA hydratase/isomerase. Position 296 (Asp-296) interacts with substrate. The interval 311 to 723 (SQDTQHAAVL…FYSAQQVSAL (413 aa)) is 3-hydroxyacyl-CoA dehydrogenase. Residues Met-325, Asp-344, 401–403 (VVE), Lys-408, and Ser-430 each bind NAD(+). Residue His-451 is the For 3-hydroxyacyl-CoA dehydrogenase activity of the active site. Asn-454 serves as a coordination point for NAD(+). Substrate-binding residues include Asn-501 and Tyr-661.

The protein in the N-terminal section; belongs to the enoyl-CoA hydratase/isomerase family. In the C-terminal section; belongs to the 3-hydroxyacyl-CoA dehydrogenase family. Heterotetramer of two alpha chains (FadB) and two beta chains (FadA).

It catalyses the reaction a (3S)-3-hydroxyacyl-CoA + NAD(+) = a 3-oxoacyl-CoA + NADH + H(+). The enzyme catalyses a (3S)-3-hydroxyacyl-CoA = a (2E)-enoyl-CoA + H2O. The catalysed reaction is a 4-saturated-(3S)-3-hydroxyacyl-CoA = a (3E)-enoyl-CoA + H2O. It carries out the reaction (3S)-3-hydroxybutanoyl-CoA = (3R)-3-hydroxybutanoyl-CoA. It catalyses the reaction a (3Z)-enoyl-CoA = a 4-saturated (2E)-enoyl-CoA. The enzyme catalyses a (3E)-enoyl-CoA = a 4-saturated (2E)-enoyl-CoA. It functions in the pathway lipid metabolism; fatty acid beta-oxidation. In terms of biological role, involved in the aerobic and anaerobic degradation of long-chain fatty acids via beta-oxidation cycle. Catalyzes the formation of 3-oxoacyl-CoA from enoyl-CoA via L-3-hydroxyacyl-CoA. It can also use D-3-hydroxyacyl-CoA and cis-3-enoyl-CoA as substrate. The chain is Fatty acid oxidation complex subunit alpha from Vibrio cholerae serotype O1 (strain ATCC 39315 / El Tor Inaba N16961).